A 301-amino-acid chain; its full sequence is Protoheme IX farnesyltransferase (301 aa).

Transmembrane regions (helical) follow at residues 20 to 42, 55 to 75, 105 to 125, 126 to 146, 150 to 172, 176 to 198, 227 to 247, 249 to 269, and 280 to 300; these read FTELVKIGIVNSNTITAFTGMWL, VDVIFFTIVGSALIVAASGAF, ALMVALVLGVVGTIMLFMTTW, QAGVLGVIGVFLYVVVYSLYA, LVSNTVIGSFSGAVPPLIGWFAV, FSMVPIMLFLVMFCWQPPHFYAI, MFFWVILLTILPFFMFDLGIV, VILATLLNIGWLALSVYGFKM, and FIYSLNYMTILFVAMVVISIF.

The protein belongs to the UbiA prenyltransferase family. Protoheme IX farnesyltransferase subfamily. In terms of assembly, interacts with CtaA.

The protein resides in the cell membrane. The enzyme catalyses heme b + (2E,6E)-farnesyl diphosphate + H2O = Fe(II)-heme o + diphosphate. Its pathway is porphyrin-containing compound metabolism; heme O biosynthesis; heme O from protoheme: step 1/1. Its function is as follows. Converts heme B (protoheme IX) to heme O by substitution of the vinyl group on carbon 2 of heme B porphyrin ring with a hydroxyethyl farnesyl side group. The polypeptide is Protoheme IX farnesyltransferase (Listeria welshimeri serovar 6b (strain ATCC 35897 / DSM 20650 / CCUG 15529 / CIP 8149 / NCTC 11857 / SLCC 5334 / V8)).